The chain runs to 568 residues: Delta 8-(E)-sphingolipid desaturase (568 aa).

The Cytochrome b5 heme-binding domain occupies Asp-2–Asp-77. Residues His-37 and His-60 each contribute to the heme site. A run of 2 helical transmembrane segments spans residues Phe-241–Ala-261 and Leu-272–Trp-292. The Histidine box-1 motif lies at His-259 to His-263. The Histidine box-2 signature appears at His-296–His-300. Helical transmembrane passes span Tyr-352–Leu-377, Tyr-389–Cys-409, and Ile-421–Ala-441. The Histidine box-3 motif lies at Gln-480–His-484. Positions Ala-549–Tyr-560 are enriched in basic and acidic residues. The segment at Ala-549 to Ala-568 is disordered.

Belongs to the fatty acid desaturase type 1 family.

It localises to the membrane. It catalyses the reaction an N-acylsphing-4-enine + 2 Fe(II)-[cytochrome b5] + O2 + 2 H(+) = a (4E,8E)-4-sphinga-4,8-dienine ceramide + 2 Fe(III)-[cytochrome b5] + 2 H2O. It functions in the pathway lipid metabolism; sphingolipid metabolism. Delta(8)-fatty-acid desaturase which introduces a double bond at the 8-position in the long-chain base (LCB) of ceramides. Required for the formation of the di-unsaturated sphingoid base (E,E)-sphinga-4,8-dienine during glucosylceramide (GluCer) biosynthesis. This Lachancea kluyveri (strain ATCC 58438 / CBS 3082 / BCRC 21498 / NBRC 1685 / JCM 7257 / NCYC 543 / NRRL Y-12651) (Yeast) protein is Delta 8-(E)-sphingolipid desaturase.